The chain runs to 651 residues: Maternal embryonic leucine zipper kinase (651 aa).

Positions 13–265 constitute a Protein kinase domain; sequence YELHETVGTG…VKHLLNHPWL (253 aa). Residues 19 to 27 and K42 each bind ATP; that span reads VGTGGFAKV. D134 acts as the Proton acceptor in catalysis. The residue at position 169 (T169) is a Phosphothreonine; by autocatalysis. S173 bears the Phosphoserine; by autocatalysis mark. The segment at 284–323 is UBA-like; that stretch reads IDEDCVTELSVFYKYSRTSTTRLISEWSYDHITASYLLLH. Positions 328 to 651 are autoinhibitory region; that stretch reads HGKAVRLKHP…VEDILSSCKV (324 aa). A disordered region spans residues 410–490; the sequence is SAPATPVVQR…TPTKKPIGTG (81 aa). A Phosphothreonine modification is found at T414. The span at 423–441 shows a compositional bias: basic and acidic residues; that stretch reads HKNEDKENSNTAVARDENV. Phosphothreonine occurs at positions 449, 451, 481, and 483. Residues 471-483 show a composition bias toward basic and acidic residues; the sequence is QTKEKNQSKETPT. 3 positions are modified to phosphoserine: S498, S505, and S517. In terms of domain architecture, KA1 spans 602 to 651; the sequence is SDFGKVTMQFELEVCQLSKSEVVGIRRQRLKGDAWVYKRLVEDILSSCKV.

Belongs to the protein kinase superfamily. CAMK Ser/Thr protein kinase family. SNF1 subfamily. Post-translationally, autophosphorylated: autophosphorylation of the T-loop at Thr-169 and Ser-173 is required for activation. Phosphorylated by the maturation promoting factor (MPF), composed of cdk1 and a cyclin-B. Also phosphorylated by some MAPK. Phosphorylated during oocyte maturation. Dephosphorylation destabilizes the protein. There is some ambiguity for some phosphosites: Thr-481/Thr-483 and Ser-505/Ser-517. Degraded when cells exit mitosis.

Its subcellular location is the cell membrane. The catalysed reaction is L-seryl-[protein] + ATP = O-phospho-L-seryl-[protein] + ADP + H(+). The enzyme catalyses L-threonyl-[protein] + ATP = O-phospho-L-threonyl-[protein] + ADP + H(+). Activated by autophosphorylation of the T-loop at Thr-169 and Ser-173: in contrast to other members of the SNF1 subfamily, phosphorylation at Thr-169 is not mediated by STK11/LKB1 but via autophosphorylation instead. Its function is as follows. Serine/threonine-protein kinase involved in various processes such as cell cycle regulation, self-renewal of stem cells, apoptosis and splicing regulation. Also plays a role in primitive hematopoiesis, possibly by affecting the expression of genes critical for hematopoiesis. Plays a role in cytokinesis during early development. The chain is Maternal embryonic leucine zipper kinase (melk) from Xenopus laevis (African clawed frog).